The chain runs to 256 residues: Small ribosomal subunit protein eS1 (256 aa).

A2 bears the N-acetylalanine; partial mark.

Belongs to the eukaryotic ribosomal protein eS1 family. Component of the small ribosomal subunit. Mature ribosomes consist of a small (40S) and a large (60S) subunit. The 40S subunit contains about 33 different proteins and 1 molecule of RNA (18S). The 60S subunit contains about 49 different proteins and 3 molecules of RNA (25S, 5.8S and 5S).

The protein localises to the cytoplasm. The chain is Small ribosomal subunit protein eS1 from Candida albicans (strain SC5314 / ATCC MYA-2876) (Yeast).